We begin with the raw amino-acid sequence, 621 residues long: MYDVIVVGAGHAGCEAILAAARMGATCLLITSDLTAIARMSCNPAIGGMAKGQITREIDALGGEMAKAIDATGIQFRLLNRSKGPAMHSPRAQADRTLYSLYMRTIIEREPNIDLLQDTVIAIETKGECFAGVRITSSRVIEGKSAILTCGTFLNGLIHVGMNHFAGGRTIAEPPVVGLTENLCAHGFQAGRLKTGTPPRIDSRSIDYRKVDEQPGDIEPILFSFESKGALQSKQVSCFITKTTEETHAILRKGFERSPLFTGKVQGIGPRYCPSVEDKIFRFPDKNSHHIFLEPEGIDTNEMYVNGFSTSLPEDIQLEGLHSIPGLEQVKMIRPGYAIEYDYFYPHQIQATLETRLIENLYFAGQINGTSGYEEAAAQGLMAGINAVLKMRKHEPLILTRSDAYIGVLIDDLITKETNEPYRMFTSSAEHRLLLRHDNADIRLHEFGYRVGLLPEHRYQATRQKIEQINAVKTLLSQIRLESGLANKLLQELEYGEVTGAQQVTTLLKRPRVTLAKLLATSPELHSQLSNISNNPLVYEQVEIDCKYEGYLKRDALVAEKIQRLEAHHIPALLDYHAIAGLSNEGREKLKKHRPENIGQASRILGVSPSDISILMVHLGR.

An FAD-binding site is contributed by 8–13 (GAGHAG). 269–283 (GPRYCPSVEDKIFRF) serves as a coordination point for NAD(+).

The protein belongs to the MnmG family. Homodimer. Heterotetramer of two MnmE and two MnmG subunits. It depends on FAD as a cofactor.

It is found in the cytoplasm. In terms of biological role, NAD-binding protein involved in the addition of a carboxymethylaminomethyl (cmnm) group at the wobble position (U34) of certain tRNAs, forming tRNA-cmnm(5)s(2)U34. This chain is tRNA uridine 5-carboxymethylaminomethyl modification enzyme MnmG, found in Chlorobium chlorochromatii (strain CaD3).